We begin with the raw amino-acid sequence, 1183 residues long: DNA-directed RNA polymerase subunit beta (1183 aa).

The protein belongs to the RNA polymerase beta chain family. In terms of assembly, the RNAP catalytic core consists of 2 alpha, 1 beta, 1 beta' and 1 omega subunit. When a sigma factor is associated with the core the holoenzyme is formed, which can initiate transcription.

The catalysed reaction is RNA(n) + a ribonucleoside 5'-triphosphate = RNA(n+1) + diphosphate. Its function is as follows. DNA-dependent RNA polymerase catalyzes the transcription of DNA into RNA using the four ribonucleoside triphosphates as substrates. The sequence is that of DNA-directed RNA polymerase subunit beta from Staphylococcus aureus (strain COL).